Consider the following 78-residue polypeptide: UPF0291 protein MCCL_0996 (78 aa).

Belongs to the UPF0291 family.

It localises to the cytoplasm. This Macrococcus caseolyticus (strain JCSC5402) (Macrococcoides caseolyticum) protein is UPF0291 protein MCCL_0996.